A 432-amino-acid polypeptide reads, in one-letter code: Phosphoribosylamine--glycine ligase (432 aa).

The ATP-grasp domain occupies 110–316 (RNFMKDNDIE…MIDVMSAVVN (207 aa)). ATP is bound at residue 137–194 (IEELGSVAIKPAGLTGGKGVKVMGDQLPDTGAAYDYAVSLLDGDNVVVEENLVGEEFT). Mg(2+) contacts are provided by glutamine 274, glutamate 286, and asparagine 288. Glutamine 274, glutamate 286, and asparagine 288 together coordinate Mn(2+).

This sequence belongs to the GARS family. Requires Mg(2+) as cofactor. The cofactor is Mn(2+).

It carries out the reaction 5-phospho-beta-D-ribosylamine + glycine + ATP = N(1)-(5-phospho-beta-D-ribosyl)glycinamide + ADP + phosphate + H(+). It functions in the pathway purine metabolism; IMP biosynthesis via de novo pathway; N(1)-(5-phospho-D-ribosyl)glycinamide from 5-phospho-alpha-D-ribose 1-diphosphate: step 2/2. This is Phosphoribosylamine--glycine ligase from Methanococcoides burtonii (strain DSM 6242 / NBRC 107633 / OCM 468 / ACE-M).